The primary structure comprises 507 residues: Maturase K (507 aa).

This sequence belongs to the intron maturase 2 family. MatK subfamily.

It localises to the plastid. Its subcellular location is the chloroplast. In terms of biological role, usually encoded in the trnK tRNA gene intron. Probably assists in splicing its own and other chloroplast group II introns. The chain is Maturase K from Kalmia procumbens (Alpine azalea).